The primary structure comprises 177 residues: Large ribosomal subunit protein eL20 (177 aa).

It belongs to the eukaryotic ribosomal protein eL20 family.

This is Large ribosomal subunit protein eL20 (RpL18A) from Spodoptera frugiperda (Fall armyworm).